Reading from the N-terminus, the 546-residue chain is CTP synthase (546 aa).

The amidoligase domain stretch occupies residues Met1 to Ile266. Ser14 serves as a coordination point for CTP. Ser14 is a UTP binding site. ATP-binding positions include Ser15–Ile20 and Asp72. Positions 72 and 140 each coordinate Mg(2+). CTP-binding positions include Asp147–Glu149, Lys187–Gln192, and Lys223. UTP-binding positions include Lys187 to Gln192 and Lys223. Lys239 to Val241 contacts ATP. Residues Thr291–Arg542 enclose the Glutamine amidotransferase type-1 domain. An L-glutamine-binding site is contributed by Gly352. Cys379 acts as the Nucleophile; for glutamine hydrolysis in catalysis. Residues Leu380–Gln383, Glu403, and Arg470 contribute to the L-glutamine site. Active-site residues include His515 and Glu517.

The protein belongs to the CTP synthase family. As to quaternary structure, homotetramer.

The catalysed reaction is UTP + L-glutamine + ATP + H2O = CTP + L-glutamate + ADP + phosphate + 2 H(+). It catalyses the reaction L-glutamine + H2O = L-glutamate + NH4(+). The enzyme catalyses UTP + NH4(+) + ATP = CTP + ADP + phosphate + 2 H(+). Its pathway is pyrimidine metabolism; CTP biosynthesis via de novo pathway; CTP from UDP: step 2/2. With respect to regulation, allosterically activated by GTP, when glutamine is the substrate; GTP has no effect on the reaction when ammonia is the substrate. The allosteric effector GTP functions by stabilizing the protein conformation that binds the tetrahedral intermediate(s) formed during glutamine hydrolysis. Inhibited by the product CTP, via allosteric rather than competitive inhibition. Functionally, catalyzes the ATP-dependent amination of UTP to CTP with either L-glutamine or ammonia as the source of nitrogen. Regulates intracellular CTP levels through interactions with the four ribonucleotide triphosphates. In Shewanella pealeana (strain ATCC 700345 / ANG-SQ1), this protein is CTP synthase.